The following is a 347-amino-acid chain: MAREWPMEQSPTLQAHLALQNADADCAAVIEALADAARELARQIAIAPLAGFDEGAATVNADGDVQKALDIVADNLMRDALRKAPVAGILSEEVDRPETVNAAAPLCVAIDPLDGSSNLQNNISVGTIFSIRPRGRDVLSSFFEPGTAQRAAGFFVYGPQTCLVLAIDHRVDLYVLHPTLREFVLARSGLRIPQDTPEFAINASNRRHWSGTVRNYVDECLAGAAGPRGRDFNMRWIASLVAEAYRILMRGGVFLYPADSRPGYREGRLRLVYEAHPMALIMEWAGGSASSGRSRILELSARSPHQRAPLIMGDVRLVRDVDQLHEGVEPLFETSDAPLFARRGLFR.

Residues Glu92, Asp111, Leu113, and Asp114 each contribute to the Mg(2+) site. Substrate is bound by residues Asp114 to Ser117 and Asn202. Glu274 contributes to the Mg(2+) binding site.

This sequence belongs to the FBPase class 1 family. As to quaternary structure, homotetramer. The cofactor is Mg(2+).

Its subcellular location is the cytoplasm. It carries out the reaction beta-D-fructose 1,6-bisphosphate + H2O = beta-D-fructose 6-phosphate + phosphate. Its pathway is carbohydrate biosynthesis; Calvin cycle. The polypeptide is Fructose-1,6-bisphosphatase class 1 2 (Bradyrhizobium sp. (strain BTAi1 / ATCC BAA-1182)).